A 787-amino-acid chain; its full sequence is Serine/threonine-protein kinase SCH9 (787 aa).

3 disordered regions span residues 1–82, 132–172, and 238–280; these read MVDF…QSGT, PQQQ…GSSQ, and SPVS…LFGQ. Positions 132–155 are enriched in low complexity; sequence PQQQQQQQAQQPPPEQQQSSAPYQ. Composition is skewed to polar residues over residues 156–172 and 239–263; these read NSAN…GSSQ and PVSS…SNHG. Residues 182–354 form the C2 domain; sequence DKTGNKLSPA…KNNKNESEWL (173 aa). The Protein kinase domain maps to 392–653; that stretch reads FHFLRLLGKG…ARELKAHPFF (262 aa). ATP-binding positions include 398–406 and lysine 421; that span reads LGKGTFGQV. Catalysis depends on aspartate 518, which acts as the Proton acceptor. Positions 654–729 constitute an AGC-kinase C-terminal domain; sequence ADIDWDLLRA…VDDSTMDDHF (76 aa).

Belongs to the protein kinase superfamily. AGC Ser/Thr protein kinase family. cAMP subfamily.

The catalysed reaction is L-seryl-[protein] + ATP = O-phospho-L-seryl-[protein] + ADP + H(+). It carries out the reaction L-threonyl-[protein] + ATP = O-phospho-L-threonyl-[protein] + ADP + H(+). In terms of biological role, protein kinase that is part of growth control pathway which is at least partially redundant with the cAMP pathway. Plays a role in filamentous growth and virulence. Prevents hypha formation specifically under hypoxia at high CO(2) levels. Required for chlamydospore formation, distinctive morphological feature of the fungal pathogen C.albicans that can be induced to form in oxygen-limited environments and has been reported in clinical specimens. In Candida albicans (strain SC5314 / ATCC MYA-2876) (Yeast), this protein is Serine/threonine-protein kinase SCH9 (SCH9).